The primary structure comprises 291 residues: Pyridoxal 5'-phosphate synthase subunit PdxS (291 aa).

Asp23 provides a ligand contact to D-ribose 5-phosphate. The active-site Schiff-base intermediate with D-ribose 5-phosphate is the Lys80. Residue Gly152 coordinates D-ribose 5-phosphate. Arg164 serves as a coordination point for D-glyceraldehyde 3-phosphate. D-ribose 5-phosphate is bound by residues Gly213 and 234 to 235 (GS).

It belongs to the PdxS/SNZ family. As to quaternary structure, in the presence of PdxT, forms a dodecamer of heterodimers.

The catalysed reaction is aldehydo-D-ribose 5-phosphate + D-glyceraldehyde 3-phosphate + L-glutamine = pyridoxal 5'-phosphate + L-glutamate + phosphate + 3 H2O + H(+). It functions in the pathway cofactor biosynthesis; pyridoxal 5'-phosphate biosynthesis. In terms of biological role, catalyzes the formation of pyridoxal 5'-phosphate from ribose 5-phosphate (RBP), glyceraldehyde 3-phosphate (G3P) and ammonia. The ammonia is provided by the PdxT subunit. Can also use ribulose 5-phosphate and dihydroxyacetone phosphate as substrates, resulting from enzyme-catalyzed isomerization of RBP and G3P, respectively. The sequence is that of Pyridoxal 5'-phosphate synthase subunit PdxS from Methanocorpusculum labreanum (strain ATCC 43576 / DSM 4855 / Z).